We begin with the raw amino-acid sequence, 448 residues long: Tubulin beta chain (448 aa).

GTP contacts are provided by Gln11, Glu69, Ser138, Gly142, Thr143, Gly144, Asn204, and Asn226. Residue Glu69 coordinates Mg(2+). The interval 429 to 448 (GIDEGDEDYEIEEEKEPLEY) is disordered.

It belongs to the tubulin family. Dimer of alpha and beta chains. A typical microtubule is a hollow water-filled tube with an outer diameter of 25 nm and an inner diameter of 15 nM. Alpha-beta heterodimers associate head-to-tail to form protofilaments running lengthwise along the microtubule wall with the beta-tubulin subunit facing the microtubule plus end conferring a structural polarity. Microtubules usually have 13 protofilaments but different protofilament numbers can be found in some organisms and specialized cells. It depends on Mg(2+) as a cofactor.

The protein resides in the cytoplasm. Its subcellular location is the cytoskeleton. Tubulin is the major constituent of microtubules, a cylinder consisting of laterally associated linear protofilaments composed of alpha- and beta-tubulin heterodimers. Microtubules grow by the addition of GTP-tubulin dimers to the microtubule end, where a stabilizing cap forms. Below the cap, tubulin dimers are in GDP-bound state, owing to GTPase activity of alpha-tubulin. In Schizosaccharomyces pombe (strain 972 / ATCC 24843) (Fission yeast), this protein is Tubulin beta chain (nda3).